A 96-amino-acid chain; its full sequence is uncharacterized protein (96 aa).

The next 3 helical transmembrane spans lie at 14–34 (FIEGMSLLILLFIAMPLKYWA), 38–58 (LAVTIVGSVHGGLFILYLLVL), and 67–87 (WPLKWSAAGFIAAFVPFGNFL).

It localises to the cell membrane. This is an uncharacterized protein from Bacillus subtilis (strain 168).